The primary structure comprises 214 residues: MAGRLREMRCELSFLKNADGSACFSQGATCIWASCSGPGDVHASKASDEAMTLDISYRANCGDNKFNVLNNIIHSTLSNAINLELFPHTTISVTVHGIQDDGSMGAVAINGACFALLDNGMPFETVFCGVLIVRVKDELIIDPTAKQEAASTGRVLFSVCKGSDGHPEVCAMDAIGHWDFIQLEAAWSLAQPSASAIFDFYKTVMKRKLSVDEQ.

It belongs to the RNase PH family. As to quaternary structure, homodimer. Component of the RNA exosome complex. Interacts with crn-4; interaction promotes the DNase activity of crn-4. Interacts with crn-3, cps-6 and cyn-13.

Its subcellular location is the cytoplasm. The protein resides in the nucleus. Non-catalytic component of the RNA exosome complex which has 3'-&gt;5' exoribonuclease activity and participates in a multitude of cellular RNA processing and degradation events. Involved in apoptotic DNA degradation. In vitro, does not bind or digest single-stranded RNA. In vitro, binds to double-stranded DNA without detectable DNase activity. The chain is Exosome complex component RRP46 homolog from Caenorhabditis elegans.